The primary structure comprises 738 residues: Squalene hopane cyclase afumA (738 aa).

2 PFTB repeats span residues 132–173 and 321–361; these read GSQY…RIIG and RRRC…KLHD. Asp460 functions as the Proton donor in the catalytic mechanism. PFTB repeat units follow at residues 482 to 523, 581 to 621, and 634 to 675; these read VRDA…ESLC, CARA…QYFK, and AARA…SQTA.

Belongs to the terpene cyclase/mutase family.

It functions in the pathway secondary metabolite biosynthesis. Its function is as follows. Squalene hopane cyclase; part of the gene cluster that mediates the biosynthesis fumihopaside A, a hopane-type glucoside that enhances the thermotolerance and UV resistance of N.fumigata. The first step of fumihopaside A biosynthesis is performed by the squalene hopane cyclase afumA that catalyzes the cyclization of 3S-oxidosqualene into the hopene 21-beta-H-hopane-3-beta,22-diol. The cytochrome P450 monooxygenase afumB is responsible for both hydroxylation at C-24 and oxidations at C-30 of the afumA product. The glycosyltransferase afumC then catalyzes the glycosylation at C-24, using UDP-D-glucose as a donor, to produce fumihopaside A. AfumC is also able to accept UDP-D-galactose and UDP-D-glucuronic acid as donors to yield minor derivatives. Fumihopaside B, another minor derivative produced, is different from fumihopaside A due to the presence of a double bond between C-22 and C-29. The chain is Squalene hopane cyclase afumA from Aspergillus fumigatus (strain CBS 144.89 / FGSC A1163 / CEA10) (Neosartorya fumigata).